A 475-amino-acid polypeptide reads, in one-letter code: Putative aldehyde dehydrogenase SERP1729 (475 aa).

201-207 (GDGSGVG) is a binding site for NAD(+). Residues glutamate 245 and cysteine 279 contribute to the active site.

The protein belongs to the aldehyde dehydrogenase family.

It catalyses the reaction an aldehyde + NAD(+) + H2O = a carboxylate + NADH + 2 H(+). The protein is Putative aldehyde dehydrogenase SERP1729 of Staphylococcus epidermidis (strain ATCC 35984 / DSM 28319 / BCRC 17069 / CCUG 31568 / BM 3577 / RP62A).